Here is a 143-residue protein sequence, read N- to C-terminus: Mediator of RNA polymerase II transcription subunit 21 (143 aa).

Residues 53–130 (KEFEKNIDEL…KVRTLTQDFT (78 aa)) adopt a coiled-coil conformation.

The protein belongs to the Mediator complex subunit 21 family. In terms of assembly, component of the Mediator complex.

The protein localises to the nucleus. Its function is as follows. Component of the Mediator complex, a coactivator involved in the regulated transcription of nearly all RNA polymerase II-dependent genes. Mediator functions as a bridge to convey information from gene-specific regulatory proteins to the basal RNA polymerase II transcription machinery. Mediator is recruited to promoters by direct interactions with regulatory proteins and serves as a scaffold for the assembly of a functional preinitiation complex with RNA polymerase II and the general transcription factors. This is Mediator of RNA polymerase II transcription subunit 21 (SRB7) from Kluyveromyces lactis (strain ATCC 8585 / CBS 2359 / DSM 70799 / NBRC 1267 / NRRL Y-1140 / WM37) (Yeast).